Here is a 368-residue protein sequence, read N- to C-terminus: D-alanine--D-alanine ligase (368 aa).

Residues 145–348 (KRLLQGAGLH…YQDLITTLIE (204 aa)) enclose the ATP-grasp domain. An ATP-binding site is contributed by 175–230 (ADQLGLPLFIKPANQGSSVGVNKATTEAEFTAAIEEAFSYDHKVLIEAAIKGREIE). Mg(2+)-binding residues include Asp-302, Glu-315, and Asn-317.

It belongs to the D-alanine--D-alanine ligase family. Mg(2+) is required as a cofactor. Requires Mn(2+) as cofactor.

It localises to the cytoplasm. It catalyses the reaction 2 D-alanine + ATP = D-alanyl-D-alanine + ADP + phosphate + H(+). Its pathway is cell wall biogenesis; peptidoglycan biosynthesis. Functionally, cell wall formation. The polypeptide is D-alanine--D-alanine ligase (Shouchella clausii (strain KSM-K16) (Alkalihalobacillus clausii)).